A 145-amino-acid polypeptide reads, in one-letter code: D-aminoacyl-tRNA deacylase (145 aa).

The Gly-cisPro motif, important for rejection of L-amino acids motif lies at 137-138 (GP).

Belongs to the DTD family. Homodimer.

It localises to the cytoplasm. It catalyses the reaction glycyl-tRNA(Ala) + H2O = tRNA(Ala) + glycine + H(+). It carries out the reaction a D-aminoacyl-tRNA + H2O = a tRNA + a D-alpha-amino acid + H(+). In terms of biological role, an aminoacyl-tRNA editing enzyme that deacylates mischarged D-aminoacyl-tRNAs. Also deacylates mischarged glycyl-tRNA(Ala), protecting cells against glycine mischarging by AlaRS. Acts via tRNA-based rather than protein-based catalysis; rejects L-amino acids rather than detecting D-amino acids in the active site. By recycling D-aminoacyl-tRNA to D-amino acids and free tRNA molecules, this enzyme counteracts the toxicity associated with the formation of D-aminoacyl-tRNA entities in vivo and helps enforce protein L-homochirality. The protein is D-aminoacyl-tRNA deacylase of Salmonella paratyphi A (strain AKU_12601).